Consider the following 1816-residue polypeptide: MENIEKKLMLGDLLFPTKTFNVLSDFGADEPFLIDGDSLILYLFSTFNISSHKIKDKQLLSTDKCQSILFFHYFESFIANVLNRKTKFQIFFIDENQYFYKNNTLKLIRKICIDYYINNDKKNVLNNSNVQFTLIKSKWWEDFSSIESYLLENMFSFMLVLFPAQESFEKYYRVDIQEVFILKTMKFLDYVVEFNSISFEGSCIETIIYGKGTMFQRGYPYFCNKEFFKQIDSFYNNEFENFNSDKLSFKDQNQILFNQQQSENRDNEINLLISTMFNNDISNNLNRIYCIYLVLLESLSIRDRGFILPTCYKIDENVLNFLDNASYKNLLYLQQVSDSSSSSSNNNNNNNNNNNNNNENINLDYLDFKLFYQILIQIQIKLPKDLNELNNIFGEEIIIKSKLIWNNVKKDFGYDIGEFDNFELFSNFQDRNNNLNDIIQEMERRTKEINSIDNSIYLVENDFIRSVAPQAYEYLKPFQSENYPDAESTINTRFIDNYHFHSTRTIEPDAFSIKLKETTFKTKKHKQRAEDKSVGSFKKYADSLNDPRNILIINKLNPTKEELEKERIKKEKEDSKKSYKKQSSSSSSSSTTTTSTTTSSTIKPKSEIGKLLESRLNQDKKRYESELDDCKSIKSFLKFLNNLDLLTSLPELYLQYFDHLINFLVKQKEDLIEEKKRTILLERKQQSKTKTHIELSEYEEKEIETSLELGIKEKSQFYQMIQKYLRSFITEKSKILSTKLQIDFANRFYTISKSLIGLSDLSNFINDHWKLKLPKLDESDVGNQQLKNSIEFQLKHSPDTLIRNTGSVEDSRVRHFKPDAWQVELLDIVDKRESALICASTSSGKTFISFYCFEQILKESNDGIVVFVCPTKALVNQMYAEVLGRYDKNYQAINHRPSNHKMVGVFTRDFRLNIETCQILITVPQCLEILFLSIMNTHFIQRCRYIIFDEVHQIASSVDGAIWERLLVFNPAPFLALSATLGNLTDFHNFLKKIDPNRKVSLIHYQSRFNDLKNFFLCQTPAKDNKSFPTYTIEPLHPMATLDQKKTGLSDISPDLKLIAGEAIQMYQVLKEKLGYEKVNHLDPVKFFANIPNKQFNLEKQHIEIYQAELKQFYTNLPSMTEKQLVVKALTSPKYNDSLKFDWASEITNIVLELQKQDLLPALFFSFNRSLCSRLAQRVYNDITHRNTNPNIIEEKKQLDLVIERFQKSLGRALADLEPNDPEKMELERLKAKRASLDYLKPQFGNLLSSDIDEKVKKDPLAPALTQGIAAHHGGCDKNYLRNVEYLFRSKKIQVVFATSTLAVGVNAPAKSSVFLGDSPYLNVLTSKQCAGRAGRRGFDNYGNVIFVGLPKQKINRLLNSRLSNIIGNSVVSPSLCLSLVSRYDYSTNGSANKSNEENKVQVKENEKEREKEKEKEKEKEKEKETIADNWDDDDDKKEITVADNWDDDEEETAESTKTTPATTPTTTTTENTPATTTTTKTPTTTSLKKLSSEDILDVQILKKSTKSLLNNSFFLGNPLQVQFQFLFSIDYLYRETYLSKDCVPMDNFSGIVTHLSYLEPFNFTFVSLLKGGVFDNLPTNQKDCDYFIIHILSYLFCVQNIPSIYVRSPSILILPPLPPTVHKIIKNHNDRLLKTFSTYLYVYKKYLKSTNDFLPFSSNDLKDSQKTTTTTTTATTSTITNKWNENFEKLKPSTENFNTGDLLSGIFKVSNLKKLKNILGSNTYFSTRILPYCNVDGSPVNSYLLDFYKHSQKKPLIEDNKIKESDLWTLLKEFSLILKVIATALTRRNPDSPISLAFSGVAKRYIQKFSDNFDH.

Disordered regions lie at residues 338–357 (DSSS…NNNN) and 562–605 (ELEK…IKPK). Low complexity predominate over residues 339 to 357 (SSSSSSNNNNNNNNNNNNN). Residues 562 to 577 (ELEKERIKKEKEDSKK) show a composition bias toward basic and acidic residues. A compositionally biased stretch (low complexity) spans 581–603 (KQSSSSSSSSTTTTSTTTSSTIK). Positions 826–999 (LDIVDKRESA…FLKKIDPNRK (174 aa)) constitute a Helicase ATP-binding domain. Position 839–846 (839–846 (ASTSSGKT)) interacts with ATP. Residues 949 to 952 (DEVH) carry the DEAH box motif. The Helicase C-terminal domain maps to 1198–1379 (QLDLVIERFQ…SVVSPSLCLS (182 aa)). Residues 1388–1487 (TNGSANKSNE…TTTKTPTTTS (100 aa)) form a disordered region. A compositionally biased stretch (basic and acidic residues) spans 1395–1427 (SNEENKVQVKENEKEREKEKEKEKEKEKEKETI). Positions 1445–1454 (NWDDDEEETA) are enriched in acidic residues. The span at 1456 to 1487 (STKTTPATTPTTTTTENTPATTTTTKTPTTTS) shows a compositional bias: low complexity.

It belongs to the helicase family. SKI2 subfamily.

The protein localises to the nucleus. This is an uncharacterized protein from Dictyostelium discoideum (Social amoeba).